The chain runs to 473 residues: Trigger factor (473 aa).

The 82-residue stretch at 162–243 (GDFVSIDLSA…VKSIKVRELP (82 aa)) folds into the PPIase FKBP-type domain. The tract at residues 433–473 (TAEFFGPSGEQAEAEQDEAAPAEDATEETDADSDEAADDSK) is disordered. Residues 444-473 (AEAEQDEAAPAEDATEETDADSDEAADDSK) show a composition bias toward acidic residues.

The protein belongs to the FKBP-type PPIase family. Tig subfamily.

The protein resides in the cytoplasm. It catalyses the reaction [protein]-peptidylproline (omega=180) = [protein]-peptidylproline (omega=0). In terms of biological role, involved in protein export. Acts as a chaperone by maintaining the newly synthesized protein in an open conformation. Functions as a peptidyl-prolyl cis-trans isomerase. The chain is Trigger factor from Mycolicibacterium vanbaalenii (strain DSM 7251 / JCM 13017 / BCRC 16820 / KCTC 9966 / NRRL B-24157 / PYR-1) (Mycobacterium vanbaalenii).